Consider the following 312-residue polypeptide: Methionyl-tRNA formyltransferase (312 aa).

A (6S)-5,6,7,8-tetrahydrofolate-binding site is contributed by 117 to 120 (SLLP).

Belongs to the Fmt family.

It carries out the reaction L-methionyl-tRNA(fMet) + (6R)-10-formyltetrahydrofolate = N-formyl-L-methionyl-tRNA(fMet) + (6S)-5,6,7,8-tetrahydrofolate + H(+). In terms of biological role, attaches a formyl group to the free amino group of methionyl-tRNA(fMet). The formyl group appears to play a dual role in the initiator identity of N-formylmethionyl-tRNA by promoting its recognition by IF2 and preventing the misappropriation of this tRNA by the elongation apparatus. The protein is Methionyl-tRNA formyltransferase of Bordetella pertussis (strain Tohama I / ATCC BAA-589 / NCTC 13251).